We begin with the raw amino-acid sequence, 376 residues long: C2H2 type master regulator of conidiophore development brlA (376 aa).

The segment covering 20-29 (TSFSSASSSA) has biased composition (low complexity). 3 disordered regions span residues 20–47 (TSFSSASSSAYDPFTPSSRRSTPNELSL), 197–229 (HHHHHNHHQHHHAQQSPMGQHFQLHSNTGASPN), and 241–267 (EAQRKTSELQRAQIRESRKRAGKPESG). A compositionally biased stretch (polar residues) spans 34–44 (TPSSRRSTPNE). A compositionally biased stretch (basic residues) spans 197-209 (HHHHHNHHQHHHA). Residues 219 to 229 (QLHSNTGASPN) are compositionally biased toward polar residues. A compositionally biased stretch (basic and acidic residues) spans 241 to 256 (EAQRKTSELQRAQIRE). The C2H2-type 1; degenerate zinc finger occupies 277–301 (CKCDYPGCNKAFRRNEHLKRHKQTF). Residues 309–332 (FSCEFCGKDQFNRQDNLNNHRKLH) form a C2H2-type 2 zinc finger. The interval 351–376 (IIEHEERSRKRRAPPKSKAEKRDYDF) is disordered. The segment covering 367 to 376 (SKAEKRDYDF) has biased composition (basic and acidic residues).

It is found in the nucleus. In terms of biological role, brlA, abaA and wetA are pivotal regulators of conidiophore development and conidium maturation. They act individually and together to regulate their own expression and that of numerous other sporulation-specific genes. Binds promoters of target genes at brlA response elements (BREs) containing the conserved sequence 5'-(C/A)(A/G)AGGG(G/A)-3'. This is C2H2 type master regulator of conidiophore development brlA from Hapsidospora chrysogena (Acremonium chrysogenum).